Reading from the N-terminus, the 62-residue chain is Potassium channel toxin kappa-KTx 3.2 (62 aa).

The signal sequence occupies residues M1–A26. Positions E27–E36 are excised as a propeptide. Disulfide bonds link C43–C61 and C47–C57.

The protein belongs to the short scorpion toxin superfamily. Potassium channel inhibitor kappa-KTx family. Kappa-KTx 3 subfamily. In terms of tissue distribution, expressed by the venom gland.

It is found in the secreted. Potassium channel inhibitor (Kv). The protein is Potassium channel toxin kappa-KTx 3.2 of Heterometrus petersii (Asian forest scorpion).